The chain runs to 234 residues: Carboxy-S-adenosyl-L-methionine synthase (234 aa).

S-adenosyl-L-methionine contacts are provided by residues Y35, 60–62 (GCS), 83–84 (DN), 109–110 (DI), N124, and R191.

The protein belongs to the class I-like SAM-binding methyltransferase superfamily. Cx-SAM synthase family. As to quaternary structure, homodimer.

The catalysed reaction is prephenate + S-adenosyl-L-methionine = carboxy-S-adenosyl-L-methionine + 3-phenylpyruvate + H2O. Catalyzes the conversion of S-adenosyl-L-methionine (SAM) to carboxy-S-adenosyl-L-methionine (Cx-SAM). The polypeptide is Carboxy-S-adenosyl-L-methionine synthase (Campylobacter concisus (strain 13826)).